Consider the following 202-residue polypeptide: QQRFPQRYVMLAIVADHGMVTKYSGNSSAITTRVHQMVSHVTEMYSPLNIATTLSLLRIWSSKDLITVQSDSSVTLGSFGDWRKVVLLSQQAHDCAFLNTATALDDSTIGLAYSNGMCDPKFSVGLVQDHSSNVFMVAVTMTHELGHNLGMAHDEAGGCACSSCIMSPAASSGPSKLFSDCSKDDYQTFLTNTNPQCILNAP.

Gln-1 is subject to Pyrrolidone carboxylic acid. Residues 7-202 form the Peptidase M12B domain; the sequence is RYVMLAIVAD…TNPQCILNAP (196 aa). Cystine bridges form between Cys-118-Cys-197, Cys-159-Cys-181, and Cys-161-Cys-164. His-143 is a Zn(2+) binding site. Glu-144 is an active-site residue. Residues His-147 and His-153 each contribute to the Zn(2+) site.

Belongs to the venom metalloproteinase (M12B) family. P-I subfamily. As to quaternary structure, monomer. Requires Zn(2+) as cofactor. The N-terminus is blocked. In terms of processing, not glycosylated. Expressed by the venom gland.

It is found in the secreted. With respect to regulation, inhibited by EDTA and 1,10-phenanthroline. Is also inhibited by endogenous tripeptide inhibitors pyroGlu-Asn-Trp, pyroGlu-Gln-Trp, and pyroGlu-Lys-Trp. Functionally, potent fibrinogenolytic protease which cleaves mainly the Aalpha (FGA) and Bbeta (FGB) chains of fibrinogen and slightly the gamma chain (FGG). Shows preference for substrates having a moderate-size and hydrophobic residue at the P1' position. Preferentially cleaves Ala-|-Leu and Tyr-|-Leu bonds. Is more susceptible to tripeptide inhibitors than TM-3 (AC O57413). This Protobothrops mucrosquamatus (Taiwan habu) protein is Snake venom metalloproteinase TM-1.